A 255-amino-acid chain; its full sequence is MNDNNIQVLPEMSSVWQETLNWQPTVEQKQQFQKLYELIILGNKKLNLTRITKPEEFWEKHLWDSLRGIKFILENKIHWSEEKKVIDIGTGAGFPGLLVAIILPQYAVTLLDSTRKKISFIENILTDLNIKNALTITNRVEQIGRLFKYRETYDIGLLRAVASTVVCAEYALPLLKIGGIAILYRGNITTDEQANLPEVVKLLGGKIERIEEFKTPLSNSIRNCIYLRKVGKTPINYPRSVGVPNQKPLLSLKKI.

Residues Gly-89, Phe-94, 112 to 114 (DST), 140 to 141 (VE), and Arg-159 contribute to the S-adenosyl-L-methionine site.

It belongs to the methyltransferase superfamily. RNA methyltransferase RsmG family.

Its subcellular location is the cytoplasm. In terms of biological role, specifically methylates the N7 position of a guanine in 16S rRNA. The polypeptide is Ribosomal RNA small subunit methyltransferase G (Trichodesmium erythraeum (strain IMS101)).